We begin with the raw amino-acid sequence, 109 residues long: Glutaredoxin-C13 (109 aa).

The Glutaredoxin domain maps to 2-108; sequence AEMVARLASE…PMLKNAGALW (107 aa). C22 and C25 form a disulfide bridge. Positions 106–109 match the Responsive for interaction with TGA factors motif; that stretch reads ALWL.

It belongs to the glutaredoxin family. CC-type subfamily.

It is found in the cytoplasm. Its subcellular location is the nucleus. Functionally, has a glutathione-disulfide oxidoreductase activity in the presence of NADPH and glutathione reductase. Reduces low molecular weight disulfides and proteins. The chain is Glutaredoxin-C13 (GRXC13) from Oryza sativa subsp. japonica (Rice).